Here is a 158-residue protein sequence, read N- to C-terminus: Large ribosomal subunit protein mL50 (158 aa).

The protein belongs to the mitochondrion-specific ribosomal protein mL50 family. Component of the mitochondrial ribosome large subunit (39S) which comprises a 16S rRNA and about 50 distinct proteins.

The protein resides in the mitochondrion. In Pongo abelii (Sumatran orangutan), this protein is Large ribosomal subunit protein mL50 (MRPL50).